The sequence spans 814 residues: Kexin (814 aa).

The N-terminal stretch at 1–19 (MKVRKYITLCFWWAFSTSA) is a signal peptide. Positions 20 to 109 (LVSSQQIPLK…LFPRNDLFKR (90 aa)) are excised as a propeptide. N-linked (GlcNAc...) asparagine glycosylation is present at N42. A propeptide spans 110–113 (LPVP) (removed by dipeptidylpeptidase STE13). Residues 114 to 678 (APPMDSSLLP…KLSSPRQAMH (565 aa)) lie on the Lumenal side of the membrane. Residue D135 coordinates Ca(2+). Residues 141–453 (QWHLVNPSFP…FGKIDAHKLI (313 aa)) enclose the Peptidase S8 domain. N163 is a glycosylation site (N-linked (GlcNAc...) asparagine). The active-site Charge relay system is D175. D184 contacts Ca(2+). Catalysis depends on H213, which acts as the Charge relay system. 4 residues coordinate Ca(2+): N227, D277, D320, and E350. 2 disulfides stabilise this stretch: C230–C377 and C322–C352. The Charge relay system role is filled by S385. N-linked (GlcNAc...) asparagine glycosylation is found at N404 and N480. Residues 462-596 (VNAQTWFYLP…RLKLFGESID (135 aa)) enclose the P/Homo B domain. Residues 651–671 (PQTTTASTDPDSDPNTPKKLS) form a disordered region. Low complexity predominate over residues 653 to 667 (TTTASTDPDSDPNTP). A helical membrane pass occupies residues 679–699 (YFLTIFLIGATFLVLYFMFFM). Residues 700–814 (KSRRRIRRSR…PDVPPSSGRS (115 aa)) lie on the Cytoplasmic side of the membrane. The tract at residues 756-814 (SLSSSENGDAEHTIDSVLTNENPFSDPIKQKFPNDANAESASNKLQELQPDVPPSSGRS) is disordered. Residues 792-801 (NAESASNKLQ) show a composition bias toward polar residues.

The protein belongs to the peptidase S8 family. Furin subfamily. It depends on Ca(2+) as a cofactor. In terms of processing, O-glycosylated.

It is found in the golgi apparatus. The protein localises to the trans-Golgi network membrane. It carries out the reaction Cleavage of -Lys-Arg-|-Xaa- and -Arg-Arg-|-Xaa- bonds to process yeast alpha-factor pheromone and killer toxin precursors.. Functionally, processing of precursors of alpha-factors and killer toxin. The polypeptide is Kexin (KEX2) (Saccharomyces cerevisiae (strain ATCC 204508 / S288c) (Baker's yeast)).